Consider the following 465-residue polypeptide: Phytase A (465 aa).

An N-terminal signal peptide occupies residues 1–26; the sequence is MVTLTFLLSAAYLLSGRVSAAPSSAG. Cysteines 30 and 39 form a disulfide. 6 residues coordinate 1D-myo-inositol hexakisphosphate: glutamine 49, tyrosine 50, arginine 80, histidine 81, arginine 84, and threonine 87. 4 cysteine pairs are disulfide-bonded: cysteine 70–cysteine 412, cysteine 213–cysteine 463, cysteine 262–cysteine 280, and cysteine 434–cysteine 442. The active-site Nucleophile is histidine 81. Asparagine 104 carries an N-linked (GlcNAc...) asparagine glycan. Residue arginine 164 participates in 1D-myo-inositol hexakisphosphate binding. Residue asparagine 205 is glycosylated (N-linked (GlcNAc...) asparagine). Aspartate 209 is a 1D-myo-inositol hexakisphosphate binding site. N-linked (GlcNAc...) asparagine glycosylation occurs at asparagine 228. Residue lysine 299 participates in 1D-myo-inositol hexakisphosphate binding. Asparagine 337 and asparagine 350 each carry an N-linked (GlcNAc...) asparagine glycan. Positions 359 and 360 each coordinate 1D-myo-inositol hexakisphosphate. A glycan (N-linked (GlcNAc...) asparagine) is linked at asparagine 374.

It belongs to the histidine acid phosphatase family. Monomer.

Its subcellular location is the secreted. The enzyme catalyses 1D-myo-inositol hexakisphosphate + H2O = 1D-myo-inositol 1,2,4,5,6-pentakisphosphate + phosphate. It catalyses the reaction 1D-myo-inositol 1,2,4,5,6-pentakisphosphate + H2O = 1D-myo-inositol 1,2,5,6-tetrakisphosphate + phosphate. It carries out the reaction 1D-myo-inositol 1,2,5,6-tetrakisphosphate + H2O = 1D-myo-inositol 1,2,6-trisphosphate + phosphate. The catalysed reaction is 1D-myo-inositol 1,2,6-trisphosphate + H2O = 1D-myo-inositol 1,2-bisphosphate + phosphate. The enzyme catalyses 1D-myo-inositol 1,2-bisphosphate + H2O = 1D-myo-inositol 2-phosphate + phosphate. Its function is as follows. Catalyzes the phosphate monoester hydrolysis of phytic acid (myo-inositol hexakisphosphate), which results in the stepwise formation of myo-inositol pentakis-, tetrakis-, tris-, bis-, and monophosphates, as well as the liberation of inorganic phosphate. Myo-inositol 2-monophosphate is the end product. Has a broad substrate specificity and is also able to dephosphorylate other classic acid phosphatase substrates such as p-nitrophenyl phosphate, phenyl phosphate, fructose 1,6-bisphosphate, fructose 6-phosphate, glucose 6-phosphate, ribose 5-phosphate, alpha-glycerophosphate, beta-glycerophosphate, 3-phosphoglycerate, phosphoenolpyruvate, as well as ADP and ATP. This Aspergillus fumigatus (strain ATCC MYA-4609 / CBS 101355 / FGSC A1100 / Af293) (Neosartorya fumigata) protein is Phytase A (phyA).